The chain runs to 373 residues: CXADR-like membrane protein (373 aa).

The signal sequence occupies residues 1 to 17; that stretch reads MSLFFLWLVSYYVGTLG. Ig-like C2-type domains are found at residues 18-126 and 134-223; these read THTE…VILK and PKCE…VRVT. The Extracellular portion of the chain corresponds to 18-234; the sequence is THTEIKRVAE…QYVQSIGMVA (217 aa). 2 cysteine pairs are disulfide-bonded: cysteine 34/cysteine 110 and cysteine 152/cysteine 207. 2 N-linked (GlcNAc...) asparagine glycosylation sites follow: asparagine 73 and asparagine 196. Residues 235–255 form a helical membrane-spanning segment; it reads GAVTGIVAGALLIFLLIWLLI. Topologically, residues 256-373 are cytoplasmic; the sequence is RRKSKDRYEE…PSQSKAFQTV (118 aa). The segment covering 263–280 has biased composition (basic and acidic residues); that stretch reads YEEEDRPNEIREDAEAPR. The interval 263–373 is disordered; it reads YEEEDRPNEI…PSQSKAFQTV (111 aa). 3 stretches are compositionally biased toward low complexity: residues 287-313, 321-332, and 353-363; these read SSSS…ASRS, AAPQQPGLAPQA, and LTKAETTLSTT. Over residues 364–373 the composition is skewed to polar residues; the sequence is PSQSKAFQTV.

In terms of tissue distribution, predominantly expressed in epithelial cells within different tissues and in the white adipose tissue. Expressed at high levels in the heart and brain, at intermediate levels in the lung, skeletal muscle, kidney and testis and at low levels in the liver and spleen.

The protein localises to the cell junction. It is found in the tight junction. The protein resides in the cell membrane. Its function is as follows. May be involved in the cell-cell adhesion. May play a role in adipocyte differentiation and development of obesity. Is required for normal small intestine development. The polypeptide is CXADR-like membrane protein (Clmp) (Mus musculus (Mouse)).